Consider the following 66-residue polypeptide: Large ribosomal subunit protein bL35 (66 aa).

It belongs to the bacterial ribosomal protein bL35 family.

This Afipia carboxidovorans (strain ATCC 49405 / DSM 1227 / KCTC 32145 / OM5) (Oligotropha carboxidovorans) protein is Large ribosomal subunit protein bL35.